The chain runs to 1388 residues: Dicer-like protein 2 (1388 aa).

One can recognise a Helicase ATP-binding domain in the interval Met-23 to Ala-203. Met-36–Thr-43 lines the ATP pocket. The short motif at Asp-144 to His-147 is the DEAH box element. Positions Lys-368–Ser-537 constitute a Helicase C-terminal domain. Positions Ala-564–Lys-658 constitute a Dicer dsRNA-binding fold domain. RNase III domains follow at residues Ile-906 to Gly-1059 and Asn-1098 to Gly-1281. Residues Glu-1137, Asp-1267, and Glu-1270 each contribute to the Mg(2+) site.

This sequence belongs to the helicase family. Dicer subfamily. The cofactor is Mg(2+). It depends on Mn(2+) as a cofactor.

Its function is as follows. Dicer-like endonuclease involved in cleaving double-stranded RNA in the RNA interference (RNAi) pathway. Produces 21 to 25 bp dsRNAs (siRNAs) which target the selective destruction of homologous RNAs leading to sequence-specific suppression of gene expression, called post-transcriptional gene silencing (PTGS). Part of a broad host defense response against viral infection and transposons. The sequence is that of Dicer-like protein 2 (dcl2) from Aspergillus fumigatus (strain ATCC MYA-4609 / CBS 101355 / FGSC A1100 / Af293) (Neosartorya fumigata).